The chain runs to 419 residues: Fumarylacetoacetase (419 aa).

Serine 2 is subject to N-acetylserine. Serine 84 and serine 92 each carry phosphoserine. Aspartate 126 is a Ca(2+) binding site. A substrate-binding site is contributed by tyrosine 128. The Proton acceptor role is filled by histidine 133. Arginine 142 contacts substrate. Ca(2+) is bound by residues glutamate 199, glutamate 201, and aspartate 233. Residue aspartate 233 coordinates Mg(2+). 2 residues coordinate substrate: glutamine 240 and tyrosine 244. Residues lysine 253 and threonine 257 each contribute to the Mg(2+) site. At serine 309 the chain carries Phosphoserine. Threonine 350 contacts substrate. A Phosphoserine modification is found at serine 417.

This sequence belongs to the FAH family. Homodimer. Ca(2+) is required as a cofactor. It depends on Mg(2+) as a cofactor. As to expression, mainly in liver and kidney.

The catalysed reaction is 4-fumarylacetoacetate + H2O = acetoacetate + fumarate + H(+). It functions in the pathway amino-acid degradation; L-phenylalanine degradation; acetoacetate and fumarate from L-phenylalanine: step 6/6. This chain is Fumarylacetoacetase (Fah), found in Rattus norvegicus (Rat).